The primary structure comprises 170 residues: Ubiquitin-conjugating enzyme E2 J2-like (170 aa).

In terms of domain architecture, UBC core spans 15–165 (DCITRLKREF…NKTFCELFPY (151 aa)). Cysteine 97 (glycyl thioester intermediate) is an active-site residue.

Belongs to the ubiquitin-conjugating enzyme family.

It carries out the reaction S-ubiquitinyl-[E1 ubiquitin-activating enzyme]-L-cysteine + [E2 ubiquitin-conjugating enzyme]-L-cysteine = [E1 ubiquitin-activating enzyme]-L-cysteine + S-ubiquitinyl-[E2 ubiquitin-conjugating enzyme]-L-cysteine.. It participates in protein modification; protein ubiquitination. Functionally, catalyzes the covalent attachment of ubiquitin to other proteins. This Dictyostelium discoideum (Social amoeba) protein is Ubiquitin-conjugating enzyme E2 J2-like.